A 362-amino-acid chain; its full sequence is Phosphatidylserine decarboxylase proenzyme (362 aa).

Residues 26-44 (YLLTGVTILSFIFMFQYKY) traverse the membrane as a helical segment. Catalysis depends on charge relay system; for autoendoproteolytic cleavage activity residues Asp-147, His-206, and Ser-316. The active-site Schiff-base intermediate with substrate; via pyruvic acid; for decarboxylase activity is the Ser-316. Position 316 is a pyruvic acid (Ser); by autocatalysis (Ser-316).

It belongs to the phosphatidylserine decarboxylase family. PSD-B subfamily. Eukaryotic type I sub-subfamily. Heterodimer of a large membrane-associated beta subunit and a small pyruvoyl-containing alpha subunit. Pyruvate is required as a cofactor. Is synthesized initially as an inactive proenzyme. Formation of the active enzyme involves a self-maturation process in which the active site pyruvoyl group is generated from an internal serine residue via an autocatalytic post-translational modification. Two non-identical subunits are generated from the proenzyme in this reaction, and the pyruvate is formed at the N-terminus of the alpha chain, which is derived from the carboxyl end of the proenzyme. The autoendoproteolytic cleavage occurs by a canonical serine protease mechanism, in which the side chain hydroxyl group of the serine supplies its oxygen atom to form the C-terminus of the beta chain, while the remainder of the serine residue undergoes an oxidative deamination to produce ammonia and the pyruvoyl prosthetic group on the alpha chain. During this reaction, the Ser that is part of the protease active site of the proenzyme becomes the pyruvoyl prosthetic group, which constitutes an essential element of the active site of the mature decarboxylase.

It is found in the endoplasmic reticulum membrane. The enzyme catalyses a 1,2-diacyl-sn-glycero-3-phospho-L-serine + H(+) = a 1,2-diacyl-sn-glycero-3-phosphoethanolamine + CO2. The protein operates within phospholipid metabolism; phosphatidylethanolamine biosynthesis; phosphatidylethanolamine from CDP-diacylglycerol: step 2/2. Its function is as follows. Catalyzes the formation of phosphatidylethanolamine (PtdEtn) from phosphatidylserine (PtdSer). Plays a central role in phospholipid metabolism and in the interorganelle trafficking of phosphatidylserine. The chain is Phosphatidylserine decarboxylase proenzyme from Plasmodium falciparum.